The chain runs to 139 residues: Ribulose bisphosphate carboxylase small subunit (139 aa).

This sequence belongs to the RuBisCO small chain family. As to quaternary structure, heterohexadecamer of 8 large and 8 small subunits.

It is found in the plastid. The protein localises to the chloroplast. Functionally, ruBisCO catalyzes two reactions: the carboxylation of D-ribulose 1,5-bisphosphate, the primary event in carbon dioxide fixation, as well as the oxidative fragmentation of the pentose substrate in the photorespiration process. Both reactions occur simultaneously and in competition at the same active site. Although the small subunit is not catalytic it is essential for maximal activity. The polypeptide is Ribulose bisphosphate carboxylase small subunit (Guillardia theta (Cryptophyte)).